The chain runs to 628 residues: MSKLWLLLLLVAAFQAVHSYPAAESDYLEEPETTWDILKETWGKMKDHYLNLGKETLAKLKELKENYKTWGKEKKQQFIATLKDKLCTPQDFEEDIDYAESDEDKDLSFTMKVLLILKETLDKLKAAVGEEKEKLIQEVKGLRAKICDKLSDYEEEEEFELEEDYEEDPETTWGILKEAWGKMKEHYLNLGKATLAKLKELKENYKTWGKEKLQIFVAKLKDKLCTQQDFEEDIDYTESDEEKDPALTAKILLKLKEYLEKLKSAAGKEKEKLIQKIKDLRAKICDKLSDYEEEEEEEEEEEFELEEDYEEDPQQTTWGILKETFGKIKDRWSQLTKIQLQKIIQVLKNRYCADQNDFEDDVAESDEEQGGRQVIQKYLQKLKEFYEKIKAAVGAKKEELKKRLEETRQKFCAKLNAAAEQNDLEEDEDEERGWLGKLGKGLKKVGKKFVKKMSSAMKAGCKKGMKMLKDNAVKVTPLVCEEKTCKTLVTILTYSCGMQYTITRTNKATYLEVAFIVNGEVKAKKNVKLGDVPSCVNLGALLGKICLKGIEGKGKSSSGQANVNFCLAILADKYNVGCKFCASYANKKFKVLPPKMFSGAQDDNGEILQASDNGEDGILLDADEFEID.

An N-terminal signal peptide occupies residues 1-19 (MSKLWLLLLLVAAFQAVHS). Positions 20–368 (YPAAESDYLE…EDDVAESDEE (349 aa)) are excised as a propeptide. The segment at 290 to 313 (DYEEEEEEEEEEEFELEEDYEEDP) is disordered. The segment covering 291–313 (YEEEEEEEEEEEFELEEDYEEDP) has biased composition (acidic residues).

It belongs to the redulysin-like family. Post-translationally, contains 5 disulfide bonds. In terms of tissue distribution, expressed by the venom gland (posterior main gland) (at protein level).

It is found in the secreted. Its function is as follows. Highly abundant protein that may be responsible for the observed disruption of sensory neuron membranes, since it is homologous to proteins such as trialysin, which forms pores in lipid bilayers. Probable insecticidal toxin. In Platymeris rhadamanthus (Red spot assassin bug), this protein is Venom redulysin 1.